Here is a 447-residue protein sequence, read N- to C-terminus: Alpha-1,3-mannosyl-glycoprotein 2-beta-N-acetylglucosaminyltransferase (447 aa).

The Cytoplasmic segment spans residues 1-6; sequence MLKKQT. The helical; Signal-anchor for type II membrane protein transmembrane segment at 7 to 29 threads the bilayer; it reads AGLVLWGAIIFVGWNALLLLFFW. Topologically, residues 30–447 are lumenal; the sequence is TRPAPGRLPS…TWTGYDPSWN (418 aa). Cys115 and Cys145 are joined by a disulfide. Arg117, Asp144, His190, and Asp212 together coordinate substrate. A Mn(2+)-binding site is contributed by Asp213. A disulfide bond links Cys239 and Cys305. Asp291 acts as the Proton acceptor in catalysis. Ser322 is a binding site for substrate.

Belongs to the glycosyltransferase 13 family. As to quaternary structure, interacts with MGAT4D. Interacts with BRI3. Requires Mn(2+) as cofactor. In terms of tissue distribution, detected in kidney, liver and brain.

It localises to the golgi apparatus membrane. The protein localises to the cytoplasm. Its subcellular location is the perinuclear region. The catalysed reaction is N(4)-(alpha-D-Man-(1-&gt;3)-[alpha-D-Man-(1-&gt;3)-[alpha-D-Man-(1-&gt;6)]-alpha-D-Man-(1-&gt;6)]-beta-D-Man-(1-&gt;4)-beta-D-GlcNAc-(1-&gt;4)-beta-D-GlcNAc)-L-asparaginyl-[protein] (N-glucan mannose isomer 5A1,2) + UDP-N-acetyl-alpha-D-glucosamine = N(4)-{beta-D-GlcNAc-(1-&gt;2)-alpha-D-Man-(1-&gt;3)-[alpha-D-Man-(1-&gt;3)-[alpha-D-Man-(1-&gt;6)]-alpha-D-Man-(1-&gt;6)]-beta-D-Man-(1-&gt;4)-beta-D-GlcNAc-(1-&gt;4)-beta-D-GlcNAc}-L-asparaginyl-[protein] + UDP + H(+). It functions in the pathway protein modification; protein glycosylation. Functionally, initiates complex N-linked carbohydrate formation. Essential for the conversion of high-mannose to hybrid and complex N-glycans. In Mus musculus (Mouse), this protein is Alpha-1,3-mannosyl-glycoprotein 2-beta-N-acetylglucosaminyltransferase (Mgat1).